The chain runs to 539 residues: Carotene epsilon-monooxygenase, chloroplastic (539 aa).

A chloroplast-targeting transit peptide spans M1–R36. Position 487 (C487) interacts with heme.

It belongs to the cytochrome P450 family. The cofactor is heme.

The protein localises to the plastid. It localises to the chloroplast. The catalysed reaction is alpha-carotene + reduced [NADPH--hemoprotein reductase] + O2 = alpha-cryptoxanthin + oxidized [NADPH--hemoprotein reductase] + H2O + H(+). It catalyses the reaction zeinoxanthin + reduced [NADPH--hemoprotein reductase] + O2 = lutein + oxidized [NADPH--hemoprotein reductase] + H2O + H(+). Heme-containing cytochrome P450 involved in the biosynthesis of xanthophylls. Specific for epsilon- and beta-ring hydroxylation of alpha-carotene. Has only a low activity toward the beta-rings of beta-carotene. The preferred substrate in planta is not alpha-carotene but the epsilon-ring of zeinoxanthin. Possesses a major beta-carotene hydroxylase activity in planta when depleted in its preferred substrate alpha-carotene. This chain is Carotene epsilon-monooxygenase, chloroplastic (CYP97C1), found in Arabidopsis thaliana (Mouse-ear cress).